The sequence spans 142 residues: uncharacterized protein (142 aa).

This is an uncharacterized protein from Acanthamoeba polyphaga (Amoeba).